A 372-amino-acid chain; its full sequence is Peptide chain release factor 2 (372 aa).

Gln253 carries the N5-methylglutamine modification.

It belongs to the prokaryotic/mitochondrial release factor family. Methylated by PrmC. Methylation increases the termination efficiency of RF2.

The protein localises to the cytoplasm. In terms of biological role, peptide chain release factor 2 directs the termination of translation in response to the peptide chain termination codons UGA and UAA. The sequence is that of Peptide chain release factor 2 from Mycolicibacterium gilvum (strain PYR-GCK) (Mycobacterium gilvum (strain PYR-GCK)).